Consider the following 158-residue polypeptide: Heavy metal-associated isoprenylated plant protein 23 (158 aa).

The 64-residue stretch at 31-94 (FQTVELKVRM…KAKATGKKAE (64 aa)) folds into the HMA domain. The a metal cation site is built by Cys-42 and Cys-45. Cys-155 carries the post-translational modification Cysteine methyl ester. A lipid anchor (S-farnesyl cysteine) is attached at Cys-155. Positions 156–158 (SIM) are cleaved as a propeptide — removed in mature form.

Belongs to the HIPP family. In terms of assembly, interacts with ZHD11/HB29.

Its function is as follows. Heavy-metal-binding protein. The chain is Heavy metal-associated isoprenylated plant protein 23 from Arabidopsis thaliana (Mouse-ear cress).